Consider the following 479-residue polypeptide: Serine--tRNA ligase, mitochondrial (479 aa).

Residues 1-42 (MRLTNRRFSTFLGNALPSKKKGFIFMSQLLYLRTFSTHTSYL) constitute a mitochondrion transit peptide. 287–289 (TAE) is a binding site for L-serine. Residue 317–319 (RRE) coordinates ATP. Glu340 is a binding site for L-serine. 404–407 (EITS) provides a ligand contact to ATP. Residue Thr438 participates in L-serine binding.

This sequence belongs to the class-II aminoacyl-tRNA synthetase family. Type-1 seryl-tRNA synthetase subfamily. As to quaternary structure, homodimer. The tRNA molecule probably binds across the dimer.

It is found in the mitochondrion matrix. It carries out the reaction tRNA(Ser) + L-serine + ATP = L-seryl-tRNA(Ser) + AMP + diphosphate + H(+). Its function is as follows. Catalyzes the attachment of serine to tRNA(Ser). Is also probably able to aminoacylate tRNA(Sec) with serine, to form the misacylated tRNA L-seryl-tRNA(Sec), which will be further converted into selenocysteinyl-tRNA(Sec). This chain is Serine--tRNA ligase, mitochondrial (dia4), found in Schizosaccharomyces pombe (strain 972 / ATCC 24843) (Fission yeast).